The following is a 517-amino-acid chain: ATP synthase subunit alpha (517 aa).

173–180 (GDRQTGKT) is a binding site for ATP.

The protein belongs to the ATPase alpha/beta chains family. As to quaternary structure, F-type ATPases have 2 components, CF(1) - the catalytic core - and CF(0) - the membrane proton channel. CF(1) has five subunits: alpha(3), beta(3), gamma(1), delta(1), epsilon(1). CF(0) has three main subunits: a(1), b(2) and c(9-12). The alpha and beta chains form an alternating ring which encloses part of the gamma chain. CF(1) is attached to CF(0) by a central stalk formed by the gamma and epsilon chains, while a peripheral stalk is formed by the delta and b chains.

The protein resides in the cell inner membrane. It catalyses the reaction ATP + H2O + 4 H(+)(in) = ADP + phosphate + 5 H(+)(out). Its function is as follows. Produces ATP from ADP in the presence of a proton gradient across the membrane. The alpha chain is a regulatory subunit. This chain is ATP synthase subunit alpha, found in Legionella pneumophila (strain Lens).